The sequence spans 610 residues: ATP-dependent zinc metalloprotease FtsH (610 aa).

The Cytoplasmic segment spans residues 1–3; the sequence is MAK. The chain crosses the membrane as a helical span at residues 4–24; the sequence is NLMLWLVIAVVLMSIFQNFSA. Topologically, residues 25-97 are extracellular; it reads NNINNRKIDY…IIGAAPEEQS (73 aa). Residues 98–118 form a helical membrane-spanning segment; it reads FFTAIFISWFPMLLLIGVWVF. Over 119–610 the chain is Cytoplasmic; the sequence is FMRQMQVGGG…SNICTDDDNN (492 aa). Residue 192–199 coordinates ATP; the sequence is GPPGTGKT. His414 contacts Zn(2+). Residue Glu415 is part of the active site. The Zn(2+) site is built by His418 and Asp492.

This sequence in the central section; belongs to the AAA ATPase family. The protein in the C-terminal section; belongs to the peptidase M41 family. In terms of assembly, homohexamer. It depends on Zn(2+) as a cofactor.

The protein localises to the cell membrane. Acts as a processive, ATP-dependent zinc metallopeptidase for both cytoplasmic and membrane proteins. Plays a role in the quality control of integral membrane proteins. The polypeptide is ATP-dependent zinc metalloprotease FtsH (Buchnera aphidicola subsp. Baizongia pistaciae (strain Bp)).